Here is an 804-residue protein sequence, read N- to C-terminus: Leucine--tRNA ligase (804 aa).

The short motif at 40–51 (PYPSGAGLHVGH) is the 'HIGH' region element. Residues 574-578 (KMSKS) carry the 'KMSKS' region motif. K577 is an ATP binding site.

The protein belongs to the class-I aminoacyl-tRNA synthetase family.

It is found in the cytoplasm. The enzyme catalyses tRNA(Leu) + L-leucine + ATP = L-leucyl-tRNA(Leu) + AMP + diphosphate. The polypeptide is Leucine--tRNA ligase (Shouchella clausii (strain KSM-K16) (Alkalihalobacillus clausii)).